Here is a 395-residue protein sequence, read N- to C-terminus: Xylose isomerase (395 aa).

Residues His54 and Asp57 contribute to the active site. Positions 181, 217, 220, 245, 255, 257, and 293 each coordinate Mg(2+).

It belongs to the xylose isomerase family. In terms of assembly, homotetramer. Mg(2+) serves as cofactor.

Its subcellular location is the cytoplasm. It carries out the reaction alpha-D-xylose = alpha-D-xylulofuranose. The chain is Xylose isomerase from Arthrobacter sp. (strain FB24).